We begin with the raw amino-acid sequence, 280 residues long: Urease accessory protein UreD 1 (280 aa).

It belongs to the UreD family. As to quaternary structure, ureD, UreF and UreG form a complex that acts as a GTP-hydrolysis-dependent molecular chaperone, activating the urease apoprotein by helping to assemble the nickel containing metallocenter of UreC. The UreE protein probably delivers the nickel.

It is found in the cytoplasm. Its function is as follows. Required for maturation of urease via the functional incorporation of the urease nickel metallocenter. This chain is Urease accessory protein UreD 1, found in Brucella abortus biovar 1 (strain 9-941).